A 578-amino-acid polypeptide reads, in one-letter code: Proline--tRNA ligase (578 aa).

The protein belongs to the class-II aminoacyl-tRNA synthetase family. ProS type 1 subfamily. As to quaternary structure, homodimer.

The protein resides in the cytoplasm. It carries out the reaction tRNA(Pro) + L-proline + ATP = L-prolyl-tRNA(Pro) + AMP + diphosphate. Catalyzes the attachment of proline to tRNA(Pro) in a two-step reaction: proline is first activated by ATP to form Pro-AMP and then transferred to the acceptor end of tRNA(Pro). As ProRS can inadvertently accommodate and process non-cognate amino acids such as alanine and cysteine, to avoid such errors it has two additional distinct editing activities against alanine. One activity is designated as 'pretransfer' editing and involves the tRNA(Pro)-independent hydrolysis of activated Ala-AMP. The other activity is designated 'posttransfer' editing and involves deacylation of mischarged Ala-tRNA(Pro). The misacylated Cys-tRNA(Pro) is not edited by ProRS. This chain is Proline--tRNA ligase, found in Burkholderia pseudomallei (strain K96243).